The following is a 449-amino-acid chain: Glucose-6-phosphate isomerase (449 aa).

Glu291 (proton donor) is an active-site residue. Active-site residues include His312 and Lys426.

This sequence belongs to the GPI family.

It is found in the cytoplasm. The enzyme catalyses alpha-D-glucose 6-phosphate = beta-D-fructose 6-phosphate. It participates in carbohydrate biosynthesis; gluconeogenesis. The protein operates within carbohydrate degradation; glycolysis; D-glyceraldehyde 3-phosphate and glycerone phosphate from D-glucose: step 2/4. In terms of biological role, catalyzes the reversible isomerization of glucose-6-phosphate to fructose-6-phosphate. The protein is Glucose-6-phosphate isomerase of Streptococcus agalactiae serotype Ia (strain ATCC 27591 / A909 / CDC SS700).